The sequence spans 588 residues: Aspartate--tRNA ligase (588 aa).

L-aspartate is bound at residue Glu-177. Positions Gln-201–Lys-204 are aspartate. L-aspartate is bound at residue Arg-223. Residues Arg-223–Glu-225 and Gln-232 each bind ATP. His-451 lines the L-aspartate pocket. Residue Glu-485 participates in ATP binding. Arg-492 contributes to the L-aspartate binding site. Gly-537–Arg-540 is an ATP binding site.

This sequence belongs to the class-II aminoacyl-tRNA synthetase family. Type 1 subfamily. As to quaternary structure, homodimer.

The protein resides in the cytoplasm. The enzyme catalyses tRNA(Asp) + L-aspartate + ATP = L-aspartyl-tRNA(Asp) + AMP + diphosphate. In terms of biological role, catalyzes the attachment of L-aspartate to tRNA(Asp) in a two-step reaction: L-aspartate is first activated by ATP to form Asp-AMP and then transferred to the acceptor end of tRNA(Asp). This chain is Aspartate--tRNA ligase, found in Staphylococcus carnosus (strain TM300).